A 260-amino-acid polypeptide reads, in one-letter code: MVKESAEILSEIRKNYILTTMKGGKRIDGRLPDEFREITIIENYVPRANGSAYVALGKTRVVAGVKIEAGEPFPDTPDQGVLTTNVELLPIAFPSFEAGPPNDLAIEVSRVVDRGIRESKMISPDKLVIEQGKKVWIVFLDINVLDYDGNLIDACTIAAVSALRNAIVPASREGGEDFKLPVVNTPISVTMVKIGDTLVCDPSLEEDQICGGRITVTTTEDGHIRAMQKGEIGVFTLDDVKKAIKMSLKVGKNIREKYFR.

The protein belongs to the RNase PH family. Rrp42 subfamily. Component of the archaeal exosome complex. Forms a hexameric ring-like arrangement composed of 3 Rrp41-Rrp42 heterodimers. The hexameric ring associates with a trimer of Rrp4 and/or Csl4 subunits.

It is found in the cytoplasm. Non-catalytic component of the exosome, which is a complex involved in RNA degradation. Contributes to the structuring of the Rrp41 active site. The chain is Exosome complex component Rrp42 from Thermoplasma volcanium (strain ATCC 51530 / DSM 4299 / JCM 9571 / NBRC 15438 / GSS1).